Here is a 701-residue protein sequence, read N- to C-terminus: Elongation factor G (701 aa).

Residues 6-285 (HKVRNIGIMA…AVVAYLPNPL (280 aa)) enclose the tr-type G domain. Residues 15-22 (AHIDAGKT), 79-83 (DNPGH), and 133-136 (NKMD) contribute to the GTP site.

It belongs to the TRAFAC class translation factor GTPase superfamily. Classic translation factor GTPase family. EF-G/EF-2 subfamily.

Its subcellular location is the cytoplasm. Catalyzes the GTP-dependent ribosomal translocation step during translation elongation. During this step, the ribosome changes from the pre-translocational (PRE) to the post-translocational (POST) state as the newly formed A-site-bound peptidyl-tRNA and P-site-bound deacylated tRNA move to the P and E sites, respectively. Catalyzes the coordinated movement of the two tRNA molecules, the mRNA and conformational changes in the ribosome. The protein is Elongation factor G (fusA) of Micrococcus luteus (Micrococcus lysodeikticus).